The following is a 132-amino-acid chain: ATP synthase epsilon chain (132 aa).

Belongs to the ATPase epsilon chain family. As to quaternary structure, F-type ATPases have 2 components, CF(1) - the catalytic core - and CF(0) - the membrane proton channel. CF(1) has five subunits: alpha(3), beta(3), gamma(1), delta(1), epsilon(1). CF(0) has three main subunits: a, b and c.

Its subcellular location is the cell membrane. Produces ATP from ADP in the presence of a proton gradient across the membrane. In Bacillus sp. (strain PS3), this protein is ATP synthase epsilon chain (atpC).